Reading from the N-terminus, the 207-residue chain is ATP synthase subunit b 2 (207 aa).

A helical transmembrane segment spans residues 53–72 (TYASQLLWLVITFSVFYLLM).

The protein belongs to the ATPase B chain family. In terms of assembly, F-type ATPases have 2 components, F(1) - the catalytic core - and F(0) - the membrane proton channel. F(1) has five subunits: alpha(3), beta(3), gamma(1), delta(1), epsilon(1). F(0) has three main subunits: a(1), b(2) and c(10-14). The alpha and beta chains form an alternating ring which encloses part of the gamma chain. F(1) is attached to F(0) by a central stalk formed by the gamma and epsilon chains, while a peripheral stalk is formed by the delta and b chains.

It localises to the cell inner membrane. In terms of biological role, f(1)F(0) ATP synthase produces ATP from ADP in the presence of a proton or sodium gradient. F-type ATPases consist of two structural domains, F(1) containing the extramembraneous catalytic core and F(0) containing the membrane proton channel, linked together by a central stalk and a peripheral stalk. During catalysis, ATP synthesis in the catalytic domain of F(1) is coupled via a rotary mechanism of the central stalk subunits to proton translocation. Its function is as follows. Component of the F(0) channel, it forms part of the peripheral stalk, linking F(1) to F(0). The b'-subunit is a diverged and duplicated form of b found in plants and photosynthetic bacteria. In Rhizobium leguminosarum bv. trifolii (strain WSM2304), this protein is ATP synthase subunit b 2 (atpF2).